The sequence spans 362 residues: Chorismate synthase (362 aa).

The NADP(+) site is built by R48 and R54. FMN-binding positions include 131–133, 243–244, G287, 302–306, and R328; these read RSS, NA, and KPTSS.

The protein belongs to the chorismate synthase family. In terms of assembly, homotetramer. Requires FMNH2 as cofactor.

The enzyme catalyses 5-O-(1-carboxyvinyl)-3-phosphoshikimate = chorismate + phosphate. It participates in metabolic intermediate biosynthesis; chorismate biosynthesis; chorismate from D-erythrose 4-phosphate and phosphoenolpyruvate: step 7/7. Catalyzes the anti-1,4-elimination of the C-3 phosphate and the C-6 proR hydrogen from 5-enolpyruvylshikimate-3-phosphate (EPSP) to yield chorismate, which is the branch point compound that serves as the starting substrate for the three terminal pathways of aromatic amino acid biosynthesis. This reaction introduces a second double bond into the aromatic ring system. This is Chorismate synthase from Bradyrhizobium diazoefficiens (strain JCM 10833 / BCRC 13528 / IAM 13628 / NBRC 14792 / USDA 110).